A 65-amino-acid polypeptide reads, in one-letter code: Disintegrin CC5 (65 aa).

The region spanning 1–65 (MNSAHPCCDP…SDCPRNRYKS (65 aa)) is the Disintegrin domain. 4 cysteine pairs are disulfide-bonded: cysteine 7/cysteine 30, cysteine 21/cysteine 27, cysteine 26/cysteine 51, and cysteine 39/cysteine 58. Residues 43–45 (RGD) carry the Cell attachment site motif.

It belongs to the disintegrin family. Dimeric disintegrin subfamily. Homodimer; disulfide-linked. Expressed by the venom gland.

The protein resides in the secreted. Its function is as follows. Binds and inhibits integrins alpha-IIb/beta-3 (ITGA2B/ITGB3), alpha-V/beta-3 (ITGAV/ITGB3) and alpha-5/beta-1 (ITGA5/ITGB1). This is Disintegrin CC5 from Cerastes cerastes (Horned desert viper).